Reading from the N-terminus, the 441-residue chain is Phosphoribosylamine--glycine ligase (441 aa).

In terms of domain architecture, ATP-grasp spans 112–319 (RNFMKKYGIE…FTEIMSAVVK (208 aa)). 139 to 196 (IEKLGDVAVKPSGLTGGKGVKVMGDQLPDLKAAKDYTSELLEKGPVVIEERFIGEEFT) is an ATP binding site. Q277, E289, and N291 together coordinate Mg(2+). Residues Q277, E289, and N291 each coordinate Mn(2+).

This sequence belongs to the GARS family. Requires Mg(2+) as cofactor. Mn(2+) is required as a cofactor.

The enzyme catalyses 5-phospho-beta-D-ribosylamine + glycine + ATP = N(1)-(5-phospho-beta-D-ribosyl)glycinamide + ADP + phosphate + H(+). It participates in purine metabolism; IMP biosynthesis via de novo pathway; N(1)-(5-phospho-D-ribosyl)glycinamide from 5-phospho-alpha-D-ribose 1-diphosphate: step 2/2. The sequence is that of Phosphoribosylamine--glycine ligase from Methanosarcina acetivorans (strain ATCC 35395 / DSM 2834 / JCM 12185 / C2A).